The following is a 210-amino-acid chain: Ribosomal RNA large subunit methyltransferase E (210 aa).

S-adenosyl-L-methionine is bound by residues Gly-61, Trp-63, Asp-81, Asp-97, and Asp-122. Lys-162 acts as the Proton acceptor in catalysis.

Belongs to the class I-like SAM-binding methyltransferase superfamily. RNA methyltransferase RlmE family.

It localises to the cytoplasm. The catalysed reaction is uridine(2552) in 23S rRNA + S-adenosyl-L-methionine = 2'-O-methyluridine(2552) in 23S rRNA + S-adenosyl-L-homocysteine + H(+). In terms of biological role, specifically methylates the uridine in position 2552 of 23S rRNA at the 2'-O position of the ribose in the fully assembled 50S ribosomal subunit. This Xanthomonas oryzae pv. oryzae (strain MAFF 311018) protein is Ribosomal RNA large subunit methyltransferase E.